Consider the following 205-residue polypeptide: Ribonuclease HII (205 aa).

Residues 22–205 (RFICGVDEAG…RKSFLKNILR (184 aa)) enclose the RNase H type-2 domain. A divalent metal cation contacts are provided by D28, E29, and D120.

Belongs to the RNase HII family. Mn(2+) is required as a cofactor. Mg(2+) serves as cofactor.

The protein resides in the cytoplasm. The catalysed reaction is Endonucleolytic cleavage to 5'-phosphomonoester.. Functionally, endonuclease that specifically degrades the RNA of RNA-DNA hybrids. The chain is Ribonuclease HII from Caldicellulosiruptor saccharolyticus (strain ATCC 43494 / DSM 8903 / Tp8T 6331).